Consider the following 441-residue polypeptide: Inositol hexakisphosphate kinase 1 (441 aa).

Residues 100–175 are disordered; the sequence is ETVEQDDTTE…MLDGNSGLSS (76 aa). The span at 113-123 shows a compositional bias: basic residues; sequence PRRKHSRRSLH. Residues 137–149 are compositionally biased toward low complexity; that stretch reads SLSLETSESSQEA. The span at 150-160 shows a compositional bias: basic and acidic residues; the sequence is KSPKVELHSHS. Residue Ser151 is modified to Phosphoserine. Substrate is bound at residue 220–228; that stretch reads PCVLDLKMG. Positions 370-392 are disordered; it reads SSCGPSTSPSNTSPEAGPSSQPK. The span at 372–391 shows a compositional bias: polar residues; the sequence is CGPSTSPSNTSPEAGPSSQP.

It belongs to the inositol phosphokinase (IPK) family.

The protein resides in the cytoplasm. The protein localises to the nucleus. The enzyme catalyses 1D-myo-inositol hexakisphosphate + ATP = 5-diphospho-1D-myo-inositol 1,2,3,4,6-pentakisphosphate + ADP. The catalysed reaction is 1-diphospho-1D-myo-inositol 2,3,4,5,6-pentakisphosphate + ATP + H(+) = 1,5-bis(diphospho)-1D-myo-inositol 2,3,4,6-tetrakisphosphate + ADP. In terms of biological role, converts inositol hexakisphosphate (InsP6) to diphosphoinositol pentakisphosphate (InsP7/PP-InsP5). Converts 1,3,4,5,6-pentakisphosphate (InsP5) to PP-InsP4. This chain is Inositol hexakisphosphate kinase 1 (IP6K1), found in Homo sapiens (Human).